A 188-amino-acid chain; its full sequence is RWD domain-containing protein 4 (188 aa).

Residues 9-111 (MELEALRSIY…EYAKDNKEQF (103 aa)) enclose the RWD domain. The tract at residues 132–167 (TPSAAPSSKKKDKKEQLSKAQKRKLADKTDHKGELP) is disordered. A compositionally biased stretch (basic and acidic residues) spans 155 to 166 (KLADKTDHKGEL).

This is RWD domain-containing protein 4 (Rwdd4) from Rattus norvegicus (Rat).